A 359-amino-acid chain; its full sequence is Methylthioribose-1-phosphate isomerase (359 aa).

Residues 50 to 52, Arg-93, and Gln-200 contribute to the substrate site; that span reads RGA. The Proton donor role is filled by Asp-241. 251–252 contacts substrate; the sequence is NK.

Belongs to the eIF-2B alpha/beta/delta subunits family. MtnA subfamily.

The catalysed reaction is 5-(methylsulfanyl)-alpha-D-ribose 1-phosphate = 5-(methylsulfanyl)-D-ribulose 1-phosphate. Its pathway is amino-acid biosynthesis; L-methionine biosynthesis via salvage pathway; L-methionine from S-methyl-5-thio-alpha-D-ribose 1-phosphate: step 1/6. Catalyzes the interconversion of methylthioribose-1-phosphate (MTR-1-P) into methylthioribulose-1-phosphate (MTRu-1-P). The protein is Methylthioribose-1-phosphate isomerase of Symbiobacterium thermophilum (strain DSM 24528 / JCM 14929 / IAM 14863 / T).